Consider the following 369-residue polypeptide: L-lactate oxidase (369 aa).

In terms of domain architecture, FMN hydroxy acid dehydrogenase spans glutamate 13 to tyrosine 369. Residue tyrosine 39 participates in pyruvate binding. FMN contacts are provided by residues proline 92–alanine 94, serine 121, and glutamine 143. Tyrosine 145 lines the pyruvate pocket. FMN is bound at residue threonine 171. Arginine 180 serves as a coordination point for pyruvate. Residues lysine 240 and serine 262 each coordinate FMN. Pyruvate contacts are provided by histidine 264 and arginine 267. Histidine 264 serves as the catalytic Proton acceptor. FMN contacts are provided by residues aspartate 295–arginine 299 and arginine 319.

The protein belongs to the FMN-dependent alpha-hydroxy acid dehydrogenase family. As to quaternary structure, homotetramer. FMN is required as a cofactor.

The enzyme catalyses (S)-lactate + O2 = pyruvate + H2O2. In terms of biological role, catalyzes the oxidation of (S)-lactate (L-lactate) to pyruvate, with a reduction of O2 to H2O2. May be involved in the utilization of L-lactate as an energy source for growth. The polypeptide is L-lactate oxidase (Lentilactobacillus hilgardii (strain ATCC 8290 / DSM 20176 / CCUG 30140 / JCM 1155 / KCTC 3500 / NBRC 15886 / NCIMB 8040 / NRRL B-1843 / 9)).